Consider the following 453-residue polypeptide: MSDLSSNRLPNRASRVTNQALSAIERFLHIEALSGVVLLLAAAAALMFANSEYASLYESFWHTPLGFNFGHFTLSWDLHFWVNDALMAVFFLVAGMEIRREIHEGALADFKQAILPIVAAIGGVCLPAIIYFSFNFNSGQIHGWAVPTATDIAFALGILALLGKKIPSNLHIILLSLAIIDDIIAVLIIAFFYSTNIDPSGLVIAIAGIALVLFFQWIGFASAWLYILPGAIIWWGLMVTGIHPSLAGVILGMMTPVLPTRTLIAPLTILSNAMQILQEKNTKTDLHHISTALKKMRKGQRDIIAPVTRIQKALHPWVAYGVMPIFAFANAGVSFANFDLSSDKSFLIVLGVVIGLFIGKPLGIITASYLAVKSGLCRLPPQMTWAGILLIGFLAGIGFTMSIFVSMLAFKDIVLLDSAKIGVLCGSGLSALIGLGYGLIYIKRNKKASHSSQ.

12 consecutive transmembrane segments (helical) span residues 27–47, 78–98, 114–134, 143–163, 172–192, 201–221, 222–242, 249–269, 316–336, 346–366, 385–405, and 421–441; these read FLHI…AALM, LHFW…GMEI, ILPI…YFSF, GWAV…ALLG, IILL…IAFF, GLVI…IGFA, SAWL…VTGI, VILG…PLTI, PWVA…VSFA, FLIV…GIIT, WAGI…SIFV, and IGVL…GLIY.

Belongs to the NhaA Na(+)/H(+) (TC 2.A.33) antiporter family.

The protein resides in the cell inner membrane. The catalysed reaction is Na(+)(in) + 2 H(+)(out) = Na(+)(out) + 2 H(+)(in). In terms of biological role, na(+)/H(+) antiporter that extrudes sodium in exchange for external protons. In Bartonella henselae (strain ATCC 49882 / DSM 28221 / CCUG 30454 / Houston 1) (Rochalimaea henselae), this protein is Na(+)/H(+) antiporter NhaA.